Here is a 301-residue protein sequence, read N- to C-terminus: GTPase Era (301 aa).

The Era-type G domain occupies 7–173 (KSGFVALLGR…LNTINKYLPE (167 aa)). The interval 15–22 (GRPNVGKS) is G1. 15–22 (GRPNVGKS) is a binding site for GTP. The interval 41-45 (QTTRN) is G2. The G3 stretch occupies residues 62–65 (DTPG). Residues 62 to 66 (DTPGI) and 123 to 126 (NKVD) each bind GTP. Residues 123-126 (NKVD) are G4. The G5 stretch occupies residues 152–154 (ISA). The KH type-2 domain occupies 204–281 (TSQEVPHATA…NLRLWVKVQH (78 aa)).

It belongs to the TRAFAC class TrmE-Era-EngA-EngB-Septin-like GTPase superfamily. Era GTPase family. As to quaternary structure, monomer.

It is found in the cytoplasm. It localises to the cell membrane. In terms of biological role, an essential GTPase that binds both GDP and GTP, with rapid nucleotide exchange. Plays a role in 16S rRNA processing and 30S ribosomal subunit biogenesis and possibly also in cell cycle regulation and energy metabolism. In Lactobacillus helveticus (strain DPC 4571), this protein is GTPase Era.